The primary structure comprises 147 residues: Sec-independent protein translocase protein TatB (147 aa).

The helical transmembrane segment at 1-21 (MFDIGFWELVVIGVVALVVLG) threads the bilayer. The tract at residues 114-147 (EPVAPISVATPDEEPTVIPAARAQPSAEQGEVKP) is disordered.

It belongs to the TatB family. The Tat system comprises two distinct complexes: a TatABC complex, containing multiple copies of TatA, TatB and TatC subunits, and a separate TatA complex, containing only TatA subunits. Substrates initially bind to the TatABC complex, which probably triggers association of the separate TatA complex to form the active translocon.

It localises to the cell inner membrane. In terms of biological role, part of the twin-arginine translocation (Tat) system that transports large folded proteins containing a characteristic twin-arginine motif in their signal peptide across membranes. Together with TatC, TatB is part of a receptor directly interacting with Tat signal peptides. TatB may form an oligomeric binding site that transiently accommodates folded Tat precursor proteins before their translocation. The protein is Sec-independent protein translocase protein TatB of Aeromonas hydrophila subsp. hydrophila (strain ATCC 7966 / DSM 30187 / BCRC 13018 / CCUG 14551 / JCM 1027 / KCTC 2358 / NCIMB 9240 / NCTC 8049).